The following is a 415-amino-acid chain: Peptide chain release factor subunit 1 (415 aa).

The protein belongs to the eukaryotic release factor 1 family. In terms of assembly, heterodimer of two subunits, one of which binds GTP.

It localises to the cytoplasm. Its function is as follows. Directs the termination of nascent peptide synthesis (translation) in response to the termination codons UAA, UAG and UGA. The protein is Peptide chain release factor subunit 1 of Methanosarcina mazei (strain ATCC BAA-159 / DSM 3647 / Goe1 / Go1 / JCM 11833 / OCM 88) (Methanosarcina frisia).